A 374-amino-acid polypeptide reads, in one-letter code: tRNA-specific 2-thiouridylase MnmA (374 aa).

ATP contacts are provided by residues 12–19 (GMSGGVDS) and Met-38. The tract at residues 98–100 (NPD) is interaction with target base in tRNA. The active-site Nucleophile is Cys-103. Residues Cys-103 and Cys-202 are joined by a disulfide bond. Gly-128 lines the ATP pocket. The tract at residues 152–154 (KDQ) is interaction with tRNA. Cys-202 functions as the Cysteine persulfide intermediate in the catalytic mechanism. The interaction with tRNA stretch occupies residues 316 to 317 (RY).

This sequence belongs to the MnmA/TRMU family.

Its subcellular location is the cytoplasm. The catalysed reaction is S-sulfanyl-L-cysteinyl-[protein] + uridine(34) in tRNA + AH2 + ATP = 2-thiouridine(34) in tRNA + L-cysteinyl-[protein] + A + AMP + diphosphate + H(+). Catalyzes the 2-thiolation of uridine at the wobble position (U34) of tRNA, leading to the formation of s(2)U34. The protein is tRNA-specific 2-thiouridylase MnmA of Vibrio parahaemolyticus serotype O3:K6 (strain RIMD 2210633).